The following is a 266-amino-acid chain: 3-methyl-2-oxobutanoate hydroxymethyltransferase 2 (266 aa).

The Mg(2+) site is built by aspartate 45 and aspartate 84. 3-methyl-2-oxobutanoate-binding positions include 45 to 46 (DS), aspartate 84, and lysine 112. Position 114 (glutamate 114) interacts with Mg(2+). Glutamate 181 acts as the Proton acceptor in catalysis.

Belongs to the PanB family. Homodecamer; pentamer of dimers. It depends on Mg(2+) as a cofactor.

Its subcellular location is the cytoplasm. It catalyses the reaction 3-methyl-2-oxobutanoate + (6R)-5,10-methylene-5,6,7,8-tetrahydrofolate + H2O = 2-dehydropantoate + (6S)-5,6,7,8-tetrahydrofolate. It functions in the pathway cofactor biosynthesis; (R)-pantothenate biosynthesis; (R)-pantoate from 3-methyl-2-oxobutanoate: step 1/2. Catalyzes the reversible reaction in which hydroxymethyl group from 5,10-methylenetetrahydrofolate is transferred onto alpha-ketoisovalerate to form ketopantoate. This Pseudomonas aeruginosa (strain ATCC 15692 / DSM 22644 / CIP 104116 / JCM 14847 / LMG 12228 / 1C / PRS 101 / PAO1) protein is 3-methyl-2-oxobutanoate hydroxymethyltransferase 2.